The primary structure comprises 1516 residues: AP-4 complex accessory subunit RUSC2 (1516 aa).

Disordered regions lie at residues 33–105 (AGGG…PFLL), 202–224 (LDECGGPGGSGSGGGASDTSGFS), 229–248 (WKLSSDESPRNPGCSGSGDQ), 331–351 (SKMSYESHHPESGGREGGYGC), 404–445 (LSSQ…PSEY), and 478–511 (GQVYTNTSPPNLSTGRQRSRSYDRSLQRSPPVRL). The span at 66 to 81 (LFSSLHSTPGGTARSI) shows a compositional bias: polar residues. Basic and acidic residues predominate over residues 82–92 (DSTKSRSRDGR). The segment covering 206 to 217 (GGPGGSGSGGGA) has biased composition (gly residues). Basic and acidic residues predominate over residues 333 to 344 (MSYESHHPESGG). Over residues 405–420 (SSQSSPSPAGSSITSC) the composition is skewed to low complexity. Positions 428–440 (SPPPGPGPDPGPS) are enriched in pro residues. The span at 480 to 493 (VYTNTSPPNLSTGR) shows a compositional bias: polar residues. Residues S536, S543, and S559 each carry the phosphoserine modification. Disordered stretches follow at residues 550–588 (GRKKTGGSGSPPLRVSVGDSSQEFSPIQEAQQDRGAPLD), 646–688 (LMDP…KEQR), 727–836 (RTQQ…PQKE), and 868–889 (ESLARGGGEGSMATRPSNANHL). Over residues 567-579 (GDSSQEFSPIQEA) the composition is skewed to polar residues. S656 is modified (phosphoserine). Residues 729-746 (QQPAPLAAPAAQVSVPAP) show a composition bias toward low complexity. S781 is modified (phosphoserine). Residues 791–801 (PSTDSSASTSC) are compositionally biased toward low complexity. In terms of domain architecture, RUN spans 1031–1175 (NVGHLVLKYL…LPFSLDLLFQ (145 aa)). Disordered stretches follow at residues 1210-1261 (RARG…GRAR), 1286-1408 (IEGS…LPSD), and 1422-1449 (QTVGSRREPEPKESLQEPHSPALPSSPP). A compositionally biased stretch (basic and acidic residues) spans 1219 to 1230 (DVDRAAQGERVK). Residues 1237–1251 (GGEEEEEEEETEEVA) are compositionally biased toward acidic residues. Positions 1355 to 1364 (ELRRSREREG) are enriched in basic and acidic residues. 2 positions are modified to phosphoserine: S1368 and S1380. Residues 1426–1437 (SRREPEPKESLQ) are compositionally biased toward basic and acidic residues. The 60-residue stretch at 1447-1506 (SPPCEVQALCHHLATGPGQLSFHKGDILRVLGRAGGDWLRCSRGPDSGLVPLAYVTLTPT) folds into the SH3 domain.

Associated component of the adapter-like complex 4 (AP-4). Interacts with active RAB1A and RAB1B, and with GOLGA2. Interacts (via RUN domain) with RAB35 (GTP-bound form); the interaction recruits RUSC2 to the plasma membrane. As to expression, widely expressed, with highest levels in brain and testis.

The protein localises to the cytoplasm. It is found in the cytosol. The protein resides in the cell membrane. In terms of biological role, associates with the adapter-like complex 4 (AP-4) and may therefore play a role in vesicular trafficking of proteins at the trans-Golgi network. The chain is AP-4 complex accessory subunit RUSC2 from Homo sapiens (Human).